The primary structure comprises 121 residues: MSAYTVSRLALDAGVSVHIVRDYLLRGLLRPVACTTGGYGLFDDTALQRLRFVRAAFEAGIGLDALARLCRALDAADGDGASAQLAVLRQLVERRREALASLEMQLAAMPTEPAQHAESLP.

Residues alanine 3 to alanine 72 enclose the HTH merR-type domain. The H-T-H motif DNA-binding region spans valine 6–leucine 25.

This chain is HTH-type transcriptional regulator MerD (merD), found in Acinetobacter calcoaceticus.